The chain runs to 274 residues: Thiamine kinase (274 aa).

Belongs to the thiamine kinase family.

It catalyses the reaction thiamine + ATP = thiamine phosphate + ADP + H(+). It participates in cofactor biosynthesis; thiamine diphosphate biosynthesis; thiamine phosphate from thiamine: step 1/1. Functionally, catalyzes the ATP-dependent phosphorylation of thiamine to thiamine phosphate. Is involved in thiamine salvage. This Escherichia coli O17:K52:H18 (strain UMN026 / ExPEC) protein is Thiamine kinase.